The chain runs to 590 residues: TPR repeat-containing protein PA4667 (590 aa).

TPR repeat units follow at residues 235-268 (VAPLLLRSRLLQSMKRSDEALPLLKAGIKEHPDD), 269-302 (KRVRLAYARLLVEQNRLDDAKAEFAGLVQQFPDD), 370-403 (LPAQLRQTDVLLKAGRVDEAAQRLDKARSEQPDY), 405-438 (IQLYLIEAEALSNNDQQEKAWQAIQEGLKQYPED), and 508-541 (PAILDSMGWINYRQGKLADAERYLRQALQRYPDH).

The chain is TPR repeat-containing protein PA4667 from Pseudomonas aeruginosa (strain ATCC 15692 / DSM 22644 / CIP 104116 / JCM 14847 / LMG 12228 / 1C / PRS 101 / PAO1).